The primary structure comprises 901 residues: Glutamate receptor 2.1 (901 aa).

Positions 1 to 25 are cleaved as a signal peptide; it reads MKRENNLVLSLLFFVIVFLMQVGEA. The Extracellular portion of the chain corresponds to 26–574; the sequence is QNRITNVNVG…SSTIFLMPLT (549 aa). N-linked (GlcNAc...) asparagine glycans are attached at residues asparagine 46, asparagine 53, asparagine 204, asparagine 267, asparagine 331, asparagine 342, asparagine 461, asparagine 477, and asparagine 536. A helical membrane pass occupies residues 575–595; sequence LALWLISLLSFFIIGLVVWVL. Over 596–604 the chain is Cytoplasmic; it reads EHRVNPDFD. The helical transmembrane segment at 605-625 threads the bilayer; it reads GPGQYQLSTIFWFSFSIMVFA. Residues 626–629 are Cytoplasmic-facing; that stretch reads PRER. Residues 630–650 form a helical membrane-spanning segment; that stretch reads VLSFWARVVVIIWYFLVLVLT. At 651–823 the chain is on the extracellular side; the sequence is QSYTASLASL…VSFRQLGFDS (173 aa). The helical transmembrane segment at 824–844 threads the bilayer; the sequence is FWVLFLVAAIVCTMALLKFVY. Topologically, residues 845–901 are cytoplasmic; the sequence is QFLKENPNQRNLRVLWEKFNEPDQKSYIKDVTKCQCSSGQGMPKNGQEGANAVNNGN.

The protein belongs to the glutamate-gated ion channel (TC 1.A.10.1) family. In terms of assembly, may form heteromers. As to expression, expressed predominantly in roots. First strongly detected in all cell types of the root except at the apex. Later expressed at the root-shoot junction.

The protein localises to the membrane. In terms of biological role, glutamate-gated receptor that probably acts as a non-selective cation channel. May be involved in light-signal transduction and calcium homeostasis via the regulation of calcium influx into cells. The sequence is that of Glutamate receptor 2.1 (GLR2.1) from Arabidopsis thaliana (Mouse-ear cress).